The primary structure comprises 66 residues: Large ribosomal subunit protein uL29 (66 aa).

It belongs to the universal ribosomal protein uL29 family.

This is Large ribosomal subunit protein uL29 from Borrelia recurrentis (strain A1).